A 2524-amino-acid polypeptide reads, in one-letter code: MTTNDTPIAIIGLSYRAPGVGRKGLWEYLSQARSAWTTVPTDRFDHSAYYKAGADRSGVSRVRGAHFIDDVYGFDAAFFNMRAEEAKNSDPQHRLLLECALEAAEDAGHSLLSIAGKKIGVFVGSGQHEYSQRLGDDEFATHTFAGTGVAPCMAANRISYFFDIDGPSVVTDAACASSVYAAHVAVSALRNGDCEAAFIGSASLNIGPGGWIVLEKTGALSEHGRSYSYDEKASGFGRGEGAGCLLVKRLDDAIRDGDPIRALIRNSACNHSGRSEGITMPNGLAQQKLLWNVHNAVGLHPGETPVVEGHGTGTAAGDPIEAGAFTAVLGKDRTAENPLYLGSIKSNFGHLEGASGMLAMVKAIMMVENGIVLPTAGFEKINPKIKDAEKIKVAETPLPWPKGEKKRAIVTNFGFGGSNSAIVIEKAPSRDELGHETNGTNGVSVSNGVNGSNGFTNGSNGTNGHAENGNGISAQERRLYTFSAKTEKSLNAYLSSFDEYLDEAPEDSDFAKDLSYTLGQRRTQHPYRVSVVADSVEDLQEKLSTVKPSRIKDRVIAFVFTGQGAQYAQMASELGHFKVFASALKDADAQLKAIGASWSLVSELAKPAEESRVDVAEISQPACTAVQLALVELLKSWGITPTAVTGHSSGEIGAAYAAGLITFRTAIAVAYFRGQAAALLAHKQTSKGAMLALGVGFEEASALIKEHSGDAYATVAAINSPKSVTVSGDVAALEAIHKVAEEQGLFARRLKIEMAYHSRHMEAVADYYLKAIAPFCEKNESFVSKSNAARPIFVSSVTGHVEDNSVVDATYWVKNLLQPVRFADSISGLFTQLGEDKSKIPNVIVEVGPHAALKSPIKQTVESLQLQGKSAFTYLPSLVRNVDGDQALLDLAGSLFTMGAPIQLGGVNQTDSKNAQVITGLPAYEWDKSAHYELKPRPTHEKLFPGEEYHELLGRRVVSNGGKERAWRQVFTLDEMPWIRDHVVAGATIFPMTAYMSAAIEACRRTLPVSSPASAFLVQNFHVVRSMEIAEEESVELMTKLVPAATGEGTTSSTAWAFEISTYKEESGWTIHAYGQIEPEFADMSLETPTFKASLPLVDTTADLLEHDIEGTYASAGVRATRYGPTFRNNVRFWEGKGYTVLEHRLRDLGQALHEPVTRGSPVSVDPPTLDGFLQGGGPLQVDEDGRRPAQMPNYINRFRVSNKIPSDPQTRFDVVMRRLDYDVKGGRMHVGVAAFARNTDGTLSPIAEWESAAFRNIGSADENIDPASDVPDNWAWEKLPRYDFLSLEELRKTLSVGSLGEEEGIRSTNLEKAAVWYIGQALKKTVNDDFSELEDHLQRFLVWAKKTEAEYHTKFDEEPTELLQQVRDHDAQGALLCFIGEQLVPILRGEVEALEIMLAEGRLTKHYEADVVNAHLSQAVGDLADNLSNLEPSLKILEVGGGTAGTTLPILEALSRGRDEPGFLNYTFTDISAGFFEGSRQKLAKWQSRITFKKLDITKDPIDQGFSASDFDIVIAANVLHATPDMVQTMTNVRTLLKPGGKVFLLEANMHPPSVLPFSLLPGWWAAEDKYRDHAEGPMMPVKVWDQLLLDSGFSGVDVAIPGVWDSEVQLMSIMASTKIAQQEGKITICGASLDDKEIAFAKNVDDALSKHLDCKTEVKPYNTISPDDELTYIIFIDSQDHSVMLNPTPEIFKNVQKMLLHNSGLIWVVPEGASPDAHMIKGLMRTLRLEEAPKNLMVFDEVPLTPVGLKGIVKLAESLRNPEVRRDEDQDFHLHNGTIHLPRMRQLNEVKELFAVEQGIAYRKVQNIWEGGRALEMTIDAAGSPDSIYFRRTNVLQQPMGDDEVLIRVEAAGVSNRDLNLVLGSIPWAPPGYDGAGKVVKTGSHVSHLREGDDIFFLALESSAFATYKKMPAWHVAKIPSGLSITDASTLPLAYTLAVLGLIRTARLRKSDTILIHGAAGAVGQASIAIAQHIGATIFATAGTEAKREFIHQAFGIPKERIFTSRTAAFRDSILSATDNKGVNVIINSLGSEFITETWALAAKFGRFVEISKEAAFQNINLPMRAFDSNVTFSPVDIRELYKHQPDELRDVWSEVVDLLKRDVVKPIKPVTLIPISDFVSALRKLKSGDHLGKIVVTLGKDEKVVAESALSPTEVKLRTDGTYLVTGGTRGIGLDLAYWMIEHGAKNIVLLGRSGATGEEVKKMLKRYEGNDVTIRALACNVGIRDELVNVMEAIKDLPPVRGVVHSALLLSDKLFANSTHEDWQIVNTPRVQGAWNLNELLPADLDFFVLLSSFNGDTGNMGQAIYAGTAGFYDAFSRYRNARGQHTVSIALPIVLDVGYVADNNLTEILKQTLGVVLKMADIRALFKGAVSGPASPFHSNGKATAFKLYMEGQSLQNPPWKYFHPVHTRERLKADKDARLKAGATGGADMFTASWTTAEDPLEGLTEALITKVSAMTMIERDEVLPDAPLTSYSLDSLVSVELRNWIRRETTVELPLSSITQAESLRALATDILSQRVI.

Residues 5–426 enclose the Ketosynthase family 3 (KS3) domain; that stretch reads DTPIAIIGLS…GSNSAIVIEK (422 aa). Catalysis depends on for beta-ketoacyl synthase activity residues Cys-175, His-310, and His-350. A disordered region spans residues 431–470; that stretch reads DELGHETNGTNGVSVSNGVNGSNGFTNGSNGTNGHAENGN. Residues 437 to 464 show a composition bias toward low complexity; the sequence is TNGTNGVSVSNGVNGSNGFTNGSNGTNG. The malonyl-CoA:ACP transacylase (MAT) domain stretch occupies residues 559–882; that stretch reads VFTGQGAQYA…TYLPSLVRNV (324 aa). The active-site For malonyltransferase activity is Ser-648. The N-terminal hotdog fold stretch occupies residues 950–1084; sequence HELLGRRVVS…GQIEPEFADM (135 aa). The PKS/mFAS DH domain maps to 950 to 1264; the sequence is HELLGRRVVS…FRNIGSADEN (315 aa). Residues 950-1266 form a dehydratase (DH) domain region; sequence HELLGRRVVS…NIGSADENID (317 aa). His-982 serves as the catalytic Proton acceptor; for dehydratase activity. The interval 1102-1264 is C-terminal hotdog fold; it reads ADLLEHDIEG…FRNIGSADEN (163 aa). The active-site Proton donor; for dehydratase activity is the Asp-1171. The segment at 1418–1611 is methyltransferase (CMet) domain; that stretch reads SQAVGDLADN…IPGVWDSEVQ (194 aa). Positions 1825–2139 are enoylreductase (ER) domain; the sequence is GSPDSIYFRR…SGDHLGKIVV (315 aa). The interval 2164–2339 is ketoreductase (KR) domain; that stretch reads GTYLVTGGTR…HTVSIALPIV (176 aa). A Carrier domain is found at 2445–2522; the sequence is DPLEGLTEAL…ALATDILSQR (78 aa). At Ser-2482 the chain carries O-(pantetheine 4'-phosphoryl)serine.

It depends on pantetheine 4'-phosphate as a cofactor.

In terms of biological role, highly reducing polyketide synthase; part of a gene cluster that mediates the biosynthesis of a yet unidentified natural product. The chain is Highly reducing polyketide synthase Preu5 from Preussia isomera (Coprophilous fungus).